The sequence spans 260 residues: 5'-nucleotidase SurE (260 aa).

A divalent metal cation-binding residues include Asp19, Asp20, Ser51, and Asn104.

This sequence belongs to the SurE nucleotidase family. Requires a divalent metal cation as cofactor.

The protein localises to the cytoplasm. The enzyme catalyses a ribonucleoside 5'-phosphate + H2O = a ribonucleoside + phosphate. Nucleotidase that shows phosphatase activity on nucleoside 5'-monophosphates. The protein is 5'-nucleotidase SurE of Paramagnetospirillum magneticum (strain ATCC 700264 / AMB-1) (Magnetospirillum magneticum).